Consider the following 146-residue polypeptide: Flagellar assembly factor FliW (146 aa).

It belongs to the FliW family. In terms of assembly, interacts with translational regulator CsrA and flagellin(s).

Its subcellular location is the cytoplasm. Functionally, acts as an anti-CsrA protein, binds CsrA and prevents it from repressing translation of its target genes, one of which is flagellin. Binds to flagellin and participates in the assembly of the flagellum. This chain is Flagellar assembly factor FliW, found in Azoarcus sp. (strain BH72).